The chain runs to 216 residues: Uracil-DNA glycosylase (216 aa).

Residue aspartate 59 is the Proton acceptor of the active site.

Belongs to the uracil-DNA glycosylase (UDG) superfamily. UNG family.

It localises to the cytoplasm. It catalyses the reaction Hydrolyzes single-stranded DNA or mismatched double-stranded DNA and polynucleotides, releasing free uracil.. Functionally, excises uracil residues from the DNA which can arise as a result of misincorporation of dUMP residues by DNA polymerase or due to deamination of cytosine. The chain is Uracil-DNA glycosylase from Staphylococcus epidermidis (strain ATCC 12228 / FDA PCI 1200).